Reading from the N-terminus, the 157-residue chain is Large ribosomal subunit protein uL11 (157 aa).

This sequence belongs to the universal ribosomal protein uL11 family.

This protein binds directly to 26S ribosomal RNA. This Chlamydomonas reinhardtii (Chlamydomonas smithii) protein is Large ribosomal subunit protein uL11 (RPL12).